Reading from the N-terminus, the 252-residue chain is Small ribosomal subunit protein uS3 (252 aa).

Positions 16 to 85 (IDEYLETKLE…NPQVEVKEVD (70 aa)) constitute a KH type-2 domain. The segment at 233–252 (EESEIEEITEEIEDVETLEE) is disordered.

It belongs to the universal ribosomal protein uS3 family. In terms of assembly, part of the 30S ribosomal subunit.

Binds the lower part of the 30S subunit head. This is Small ribosomal subunit protein uS3 from Methanosphaera stadtmanae (strain ATCC 43021 / DSM 3091 / JCM 11832 / MCB-3).